We begin with the raw amino-acid sequence, 148 residues long: 3-dehydroquinate dehydratase (148 aa).

The active-site Proton acceptor is the tyrosine 26. Residues asparagine 77, histidine 83, and aspartate 90 each contribute to the substrate site. Histidine 103 serves as the catalytic Proton donor. Substrate-binding positions include 104–105 and arginine 114; that span reads LS.

It belongs to the type-II 3-dehydroquinase family. Homododecamer.

It catalyses the reaction 3-dehydroquinate = 3-dehydroshikimate + H2O. It participates in metabolic intermediate biosynthesis; chorismate biosynthesis; chorismate from D-erythrose 4-phosphate and phosphoenolpyruvate: step 3/7. Catalyzes a trans-dehydration via an enolate intermediate. The chain is 3-dehydroquinate dehydratase (aroQ) from Pasteurella multocida (strain Pm70).